The sequence spans 276 residues: Transmembrane protein 81 (276 aa).

The first 24 residues, 1–24, serve as a signal peptide directing secretion; the sequence is MKTSATSFIPGSLVLAFCLPVVAT. Residues 25 to 225 are Extracellular-facing; it reads SPKTLAIPEK…QHPPWKKKVA (201 aa). N45 carries an N-linked (GlcNAc...) asparagine glycan. The Ig-like domain occupies 83-176; sequence TNWLCGMLHF…NLRLVKRLYF (94 aa). A disulfide bridge connects residues C104 and C160. N211 is a glycosylation site (N-linked (GlcNAc...) asparagine). Residues 226-246 traverse the membrane as a helical segment; it reads IAVGIGVAGGVTGGVLVSIVL. Residues 247-276 are Cytoplasmic-facing; the sequence is CGRLSVIHSSASLETLQALLPKGGMLRKPD.

In terms of assembly, forms a complex with IZUMO1 and SPACA6 on spermatocyte cell membrane required for fertilization.

It is found in the cell membrane. In terms of biological role, essential fertilization factor required for male fertility. Part of a conserved trimeric sperm complex with the essential fertilization factors IZUMO1 and SPACA6 which bridges sperm and oocyte membranes during fertilization by binding to IZUMO1R/JUNO on the oocyte. The sequence is that of Transmembrane protein 81 (TMEM81) from Bos taurus (Bovine).